A 232-amino-acid chain; its full sequence is Rho-related GTP-binding protein Rho6 (232 aa).

GTP-binding positions include 23–28 (QCGKTA), 38–45 (YPETYVPT), 67–71 (DTSGS), 125–128 (CKTD), and 169–170 (AF). The Effector region signature appears at 42-50 (YVPTVFENY). Position 229 is a cysteine methyl ester (Cys229). Cys229 carries the S-geranylgeranyl cysteine lipid modification. Positions 230–232 (SIM) are cleaved as a propeptide — removed in mature form.

It belongs to the small GTPase superfamily. Rho family. Binds GRB7 and PLXNB1. Interacts with UBXD5. Interacts with PLXNA2. Mostly expressed in brain and liver.

It is found in the cell membrane. The protein resides in the cytoplasm. The protein localises to the cytoskeleton. In terms of biological role, lacks intrinsic GTPase activity. Has a low affinity for GDP, and constitutively binds GTP. Controls rearrangements of the actin cytoskeleton. Induces the Rac-dependent neuritic process formation in part by disruption of the cortical actin filaments. Causes the formation of many neuritic processes from the cell body with disruption of the cortical actin filaments. The chain is Rho-related GTP-binding protein Rho6 (RND1) from Homo sapiens (Human).